Reading from the N-terminus, the 452-residue chain is Phosphoglucosamine mutase (452 aa).

Ser-101 serves as the catalytic Phosphoserine intermediate. The Mg(2+) site is built by Ser-101, Asp-241, Asp-243, and Asp-245. Ser-101 is subject to Phosphoserine.

This sequence belongs to the phosphohexose mutase family. Requires Mg(2+) as cofactor. In terms of processing, activated by phosphorylation.

It carries out the reaction alpha-D-glucosamine 1-phosphate = D-glucosamine 6-phosphate. Functionally, catalyzes the conversion of glucosamine-6-phosphate to glucosamine-1-phosphate. The protein is Phosphoglucosamine mutase of Lactococcus lactis subsp. cremoris (strain MG1363).